The chain runs to 228 residues: Urease accessory protein UreE (228 aa).

The disordered stretch occupies residues 193–228 (HGSGLHIHGIHSHGDGHSHSHDDHDHDHNHDHDHKH). Residues 204 to 228 (SHGDGHSHSHDDHDHDHNHDHDHKH) are compositionally biased toward basic and acidic residues.

This sequence belongs to the UreE family.

It localises to the cytoplasm. Functionally, involved in urease metallocenter assembly. Binds nickel. Probably functions as a nickel donor during metallocenter assembly. In Yersinia rohdei, this protein is Urease accessory protein UreE.